A 334-amino-acid chain; its full sequence is Protein-methionine-sulfoxide reductase catalytic subunit MsrP (334 aa).

The segment at residues 1 to 44 is a signal peptide (tat-type signal); that stretch reads MKKNQFLKESDITAESVFFMKRRQVLKALGISAAALSLPHAAHA. Mo-molybdopterin contacts are provided by residues N88, 91 to 92, C146, T181, N233, R238, and 249 to 251; these read YE and GIK.

The protein belongs to the MsrP family. As to quaternary structure, heterodimer of a catalytic subunit (MsrP) and a heme-binding subunit (MsrQ). Mo-molybdopterin is required as a cofactor. In terms of processing, predicted to be exported by the Tat system. The position of the signal peptide cleavage has not been experimentally proven.

Its subcellular location is the periplasm. The catalysed reaction is L-methionyl-[protein] + a quinone + H2O = L-methionyl-(S)-S-oxide-[protein] + a quinol. It carries out the reaction L-methionyl-[protein] + a quinone + H2O = L-methionyl-(R)-S-oxide-[protein] + a quinol. Its function is as follows. Part of the MsrPQ system that repairs oxidized periplasmic proteins containing methionine sulfoxide residues (Met-O), using respiratory chain electrons. Thus protects these proteins from oxidative-stress damage caused by reactive species of oxygen and chlorine generated by the host defense mechanisms. MsrPQ is essential for the maintenance of envelope integrity under bleach stress, rescuing a wide series of structurally unrelated periplasmic proteins from methionine oxidation, including the primary periplasmic chaperone SurA and the lipoprotein Pal. The catalytic subunit MsrP is non-stereospecific, being able to reduce both (R-) and (S-) diastereoisomers of methionine sulfoxide. This chain is Protein-methionine-sulfoxide reductase catalytic subunit MsrP, found in Shigella dysenteriae serotype 1 (strain Sd197).